Here is a 479-residue protein sequence, read N- to C-terminus: MKIYNTASKNKETFKTINNKKLIKMYVCGPTVYDHAHLGHGRTYVAFDIIRRYLEHKNYIVQLIINFTDIDDKIINRANEQGTTIKELSDKFINSFLEDMEKLNVKPALIYPRVSEHINEIIEFIKVLEKKGYAYATADGVYFDTSKYEKYGELRKINIKEETSEQKNININKKNQRDFALWKFAKPDEPKWDSPWGEGRPAWHIECSAMSLKYLGDNFDIHGGGCDLIFPHHENEKAQSECYTDKKWVNYWIHTGFVMVNNEKMSKSLGNFSTLKDLFEKYSAELIRFFLLERHYSSPLDYTEDAINHSKNNLDKLYNTIQNITVAFRNSEIKYKLNEIDKNTIETIHNCTEKFYTAMDDNFNTAQALKYVFEVSTAINKYINNYANSDELPNYSIILKSYEFFKMVGEIFGIFGSSTINTATNTNIAEENLINILMELRADLKKEKNYNLSDKIRDKLKEMDIILEDSPKGTIWKKA.

A Zn(2+)-binding site is contributed by cysteine 28. The 'HIGH' region signature appears at 30-40 (PTVYDHAHLGH). Residues cysteine 207, histidine 232, and glutamate 236 each contribute to the Zn(2+) site. A 'KMSKS' region motif is present at residues 264-268 (KMSKS). Lysine 267 is a binding site for ATP.

The protein belongs to the class-I aminoacyl-tRNA synthetase family. Requires Zn(2+) as cofactor.

Its subcellular location is the cytoplasm. The catalysed reaction is tRNA(Cys) + L-cysteine + ATP = L-cysteinyl-tRNA(Cys) + AMP + diphosphate. The protein is Cysteine--tRNA ligase of Methanococcus aeolicus (strain ATCC BAA-1280 / DSM 17508 / OCM 812 / Nankai-3).